The following is a 78-amino-acid chain: Putative membrane protein insertion efficiency factor (78 aa).

Belongs to the UPF0161 family.

Its subcellular location is the cell membrane. Functionally, could be involved in insertion of integral membrane proteins into the membrane. This chain is Putative membrane protein insertion efficiency factor, found in Bacillus thuringiensis subsp. konkukian (strain 97-27).